A 358-amino-acid chain; its full sequence is Biotin synthase (358 aa).

The Radical SAM core domain occupies 44–272 (NRVRLNYLVN…DSEVRAAAGR (229 aa)). 3 residues coordinate [4Fe-4S] cluster: cysteine 59, cysteine 63, and cysteine 66. Positions 103, 136, 196, and 267 each coordinate [2Fe-2S] cluster.

Belongs to the radical SAM superfamily. Biotin synthase family. In terms of assembly, homodimer. The cofactor is [4Fe-4S] cluster. [2Fe-2S] cluster serves as cofactor.

It carries out the reaction (4R,5S)-dethiobiotin + (sulfur carrier)-SH + 2 reduced [2Fe-2S]-[ferredoxin] + 2 S-adenosyl-L-methionine = (sulfur carrier)-H + biotin + 2 5'-deoxyadenosine + 2 L-methionine + 2 oxidized [2Fe-2S]-[ferredoxin]. Its pathway is cofactor biosynthesis; biotin biosynthesis; biotin from 7,8-diaminononanoate: step 2/2. In terms of biological role, catalyzes the conversion of dethiobiotin (DTB) to biotin by the insertion of a sulfur atom into dethiobiotin via a radical-based mechanism. The protein is Biotin synthase of Cutibacterium acnes (strain DSM 16379 / KPA171202) (Propionibacterium acnes).